A 260-amino-acid polypeptide reads, in one-letter code: 14-3-3 protein 4 (260 aa).

Residues 238-260 (DNADDVGDDIKEASKPESGEGQQ) form a disordered region. The span at 245-260 (DDIKEASKPESGEGQQ) shows a compositional bias: basic and acidic residues.

This sequence belongs to the 14-3-3 family. Homodimer.

This chain is 14-3-3 protein 4 (TFT4), found in Solanum lycopersicum (Tomato).